The following is a 270-amino-acid chain: MSDQQQPPVYKIALGIEYDGSKYYGWQRQNEVRSVQEKLEKALSQVANEPITVFCAGRTDAGVHGTGQVVHFETTALRKDAAWTLGVNANLPGDIAVRWVKTVPDDFHARFSATARRYRYIIYNHRLRPAVLSKGVTHFYEPLDAERMHRAAQCLLGENDFTSFRAVQCQSRTPWRNVMHINVTRHGPYVVVDIKANAFVHHMVRNIVGSLMEVGAHNQPESWIAELLAAKDRTLAAATAKAEGLYLVAVDYPDRYDLPKPPMGPLFLAD.

Asp-60 (nucleophile) is an active-site residue. The segment at Phe-107–Phe-111 is RNA binding. Tyr-118 provides a ligand contact to substrate. Residues Gln-168–Arg-172 are interaction with tRNA.

It belongs to the tRNA pseudouridine synthase TruA family. In terms of assembly, homodimer.

The enzyme catalyses uridine(38/39/40) in tRNA = pseudouridine(38/39/40) in tRNA. In terms of biological role, formation of pseudouridine at positions 38, 39 and 40 in the anticodon stem and loop of transfer RNAs. The chain is tRNA pseudouridine synthase A from Escherichia coli (strain K12 / DH10B).